We begin with the raw amino-acid sequence, 1224 residues long: MLPYTVNFKVSARTLTGALNAHNKAAVDWGWQGLIAYGCHSLVVVIDSITAQTLQVLEKHKADVVKVKWARENYHHNIGSPYCLRLASADVNGKIIVWDVAAGVAQCEIQEHAKPIQDVQWLWNQDASRDLLLAIHPPNYIVLWNADTGTKLWKKSYADNILSFSFDPFDPSHLTLLTSEGIVFISDFSPSKPPSGPGKKVYISSPHSSPAHNKLATATGAKKALNKVKILITQEKPSAEFITLNDCLQLAYLPSKRNHMLLLYPREILILDLEVNQTVGVIAIERTGVPFLQVIPCFQRDGLFCLHENGCITLRVRRSYNNIFTTSNEEPDPDPVQELTYDLRSQCDAIRVTKTVRPFSMVCCPVNENAAALVVSDGRVMIWELKSAVCNRNSRNSSSGVSPLYSPVSFCGIPVGVLQNKLPDLSLDNMIGQSAIAGEEHPRGSILREVHLKFLLTGLLSGLPAPQFAIRMCPPLTTKNIKMYQPLLAVGTSNGSVLVYHLTSGLLHKELSIHSCEVKGIEWTSLTSFLSFATSTPNNMGLVRNELQLVDLPTGRSIAFRGERGNDESAIEMIKVSHLKQYLAVVFRDKPLELWDVRTCTLLREMSKNFPTITALEWSPSHNLKSLRKKQLATREAMARQTVVSDTELSIVESSVISLLQEAESKSELSQNISAREHFVFTDIDGQVYHLTVEGNSVKDSARIPPDGSMGSITCIAWKGDTLVLGDMDGNLNFWDLKGRVSRGIPTHRSWVRKIRFAPGKGNQKLIAMYNDGAEVWDTKEVQMVSSLRSGRNVTFRILDVDWCTSDKVILASDDGCIRVLEMSMKSACFRMDEQELTEPVWCPYLLVPRASLALKAFLLHQPWNGQYSLDISHVDYPENEEIKNLLQEQLNSLSNDIKKLLLDPEFTLLQRCLLVSRLYGDESELHFWTVAAHYLHSLSQEKSASTTAPKEAAPRDKLSNPLDICYDVLCENAYFQKFQLERVNLQEVKRSTYDHTRKCTDQLLLLGQTDRAVQLLLETSADNQHYYCDSLKACLVTTVTSSGPSQSTIKLVATNMIANGKLAEGVQLLCLIDKAADACRYLQTYGEWNRAAWLAKVRLNPEECADVLRRWVDHLCSPQVNQKSKALLVLLSLGCFFSVAETLHSMRYFDRAALFVEACLKYGAFEVTEDTEKLITAIYADYARSLKNLGFKQGAVLFASKAGAAGKDLLNELESPKEEPIEE.

2 WD repeats span residues 59–108 (KHKA…AQCE) and 111–154 (EHAK…KLWK). 2 positions are modified to phosphoserine: serine 205 and serine 209. The stretch at 354 to 393 (KTVRPFSMVCCPVNENAAALVVSDGRVMIWELKSAVCNRN) is one WD 3 repeat. Phosphoserine occurs at positions 402 and 406. WD repeat units follow at residues 471–510 (RMCP…LHKE), 566–605 (NDES…LLRE), 708–745 (GSMG…SRGI), 747–787 (THRS…MVSS), 793–831 (NVTF…ACFR), and 893–940 (SLSN…HSLS).

In terms of assembly, component of the complex WDR11 composed of C17orf75, FAM91A1 and WDR11; FAM91A1 and WDR11 are required for proper location of the complex. Interacts (via the N-terminal and the central portion of the protein) with EMX1. Interacts with GLI3; the interaction associateS EMX1 with GLI3. Interacts with TBC1D23; this interaction may be indirect and recruits TBC1D23 to AP-1-derived vesicles. As to expression, ubiquitous.

The protein localises to the cytoplasm. The protein resides in the cytoskeleton. It is found in the cilium basal body. Its subcellular location is the nucleus. It localises to the cilium axoneme. The protein localises to the cytoplasmic vesicle. The protein resides in the golgi apparatus. It is found in the trans-Golgi network. In terms of biological role, involved in the Hedgehog (Hh) signaling pathway, is essential for normal ciliogenesis. Regulates the proteolytic processing of GLI3 and cooperates with the transcription factor EMX1 in the induction of downstream Hh pathway gene expression and gonadotropin-releasing hormone production. WDR11 complex facilitates the tethering of Adaptor protein-1 complex (AP-1)-derived vesicles. WDR11 complex acts together with TBC1D23 to facilitate the golgin-mediated capture of vesicles generated using AP-1. This is WD repeat-containing protein 11 (WDR11) from Homo sapiens (Human).